Consider the following 174-residue polypeptide: Calcineurin subunit B (174 aa).

4 consecutive EF-hand domains span residues 21–56 (EEIE…SSNP), 60–88 (RLMD…FSGK), 90–125 (SKLD…MVGK), and 131–166 (ELQQ…KSVA). Aspartate 34, aspartate 36, serine 38, threonine 40, glutamate 45, aspartate 66, aspartate 68, asparagine 70, threonine 72, glutamate 77, aspartate 103, aspartate 105, aspartate 107, tyrosine 109, glutamate 114, aspartate 144, aspartate 146, aspartate 148, arginine 150, and glutamate 155 together coordinate Ca(2+).

This sequence belongs to the calcineurin regulatory subunit family. As to quaternary structure, composed of a catalytic subunit (A) and a regulatory subunit (B).

In terms of biological role, regulatory subunit of calcineurin, a calcium-dependent, calmodulin stimulated protein phosphatase. Confers calcium sensitivity. This chain is Calcineurin subunit B (CNB1), found in Debaryomyces hansenii (strain ATCC 36239 / CBS 767 / BCRC 21394 / JCM 1990 / NBRC 0083 / IGC 2968) (Yeast).